Here is a 488-residue protein sequence, read N- to C-terminus: Glycogen synthase (488 aa).

Residue K17 participates in ADP-alpha-D-glucose binding.

The protein belongs to the glycosyltransferase 1 family. Bacterial/plant glycogen synthase subfamily.

The enzyme catalyses [(1-&gt;4)-alpha-D-glucosyl](n) + ADP-alpha-D-glucose = [(1-&gt;4)-alpha-D-glucosyl](n+1) + ADP + H(+). It functions in the pathway glycan biosynthesis; glycogen biosynthesis. Functionally, synthesizes alpha-1,4-glucan chains using ADP-glucose. In Nitratidesulfovibrio vulgaris (strain DSM 19637 / Miyazaki F) (Desulfovibrio vulgaris), this protein is Glycogen synthase.